Here is a 986-residue protein sequence, read N- to C-terminus: Isoleucine--tRNA ligase (986 aa).

Positions 534 to 538 match the 'KMSKS' region motif; it reads EMHKS. ATP is bound at residue Lys537.

Belongs to the class-I aminoacyl-tRNA synthetase family. IleS type 2 subfamily. As to quaternary structure, monomer. Zn(2+) is required as a cofactor.

It is found in the cytoplasm. The catalysed reaction is tRNA(Ile) + L-isoleucine + ATP = L-isoleucyl-tRNA(Ile) + AMP + diphosphate. Functionally, catalyzes the attachment of isoleucine to tRNA(Ile). As IleRS can inadvertently accommodate and process structurally similar amino acids such as valine, to avoid such errors it has two additional distinct tRNA(Ile)-dependent editing activities. One activity is designated as 'pretransfer' editing and involves the hydrolysis of activated Val-AMP. The other activity is designated 'posttransfer' editing and involves deacylation of mischarged Val-tRNA(Ile). This Saccharolobus solfataricus (strain ATCC 35092 / DSM 1617 / JCM 11322 / P2) (Sulfolobus solfataricus) protein is Isoleucine--tRNA ligase (ileS).